Reading from the N-terminus, the 207-residue chain is Protein-L-isoaspartate O-methyltransferase (207 aa).

The active site involves Ser-56.

This sequence belongs to the methyltransferase superfamily. L-isoaspartyl/D-aspartyl protein methyltransferase family.

It is found in the cytoplasm. The catalysed reaction is [protein]-L-isoaspartate + S-adenosyl-L-methionine = [protein]-L-isoaspartate alpha-methyl ester + S-adenosyl-L-homocysteine. In terms of biological role, catalyzes the methyl esterification of L-isoaspartyl residues in peptides and proteins that result from spontaneous decomposition of normal L-aspartyl and L-asparaginyl residues. It plays a role in the repair and/or degradation of damaged proteins. The chain is Protein-L-isoaspartate O-methyltransferase from Pyrobaculum islandicum (strain DSM 4184 / JCM 9189 / GEO3).